The primary structure comprises 166 residues: Tetranectin-like protein (166 aa).

3 disulfide bridges follow: C37/C47, C64/C160, and C136/C152. The 119-residue stretch at 43–161 (IHKKCYLASR…CRSEKRYICE (119 aa)) folds into the C-type lectin domain.

This chain is Tetranectin-like protein, found in Carcharhinus perezii (Reef shark).